The sequence spans 85 residues: UPF0291 protein SpyM3_1470 (85 aa).

The disordered stretch occupies residues Thr62–Ser85.

Belongs to the UPF0291 family.

The protein localises to the cytoplasm. This Streptococcus pyogenes serotype M3 (strain ATCC BAA-595 / MGAS315) protein is UPF0291 protein SpyM3_1470.